The following is a 171-amino-acid chain: Adenine phosphoribosyltransferase (171 aa).

It belongs to the purine/pyrimidine phosphoribosyltransferase family. In terms of assembly, homodimer.

It is found in the cytoplasm. It carries out the reaction AMP + diphosphate = 5-phospho-alpha-D-ribose 1-diphosphate + adenine. Its pathway is purine metabolism; AMP biosynthesis via salvage pathway; AMP from adenine: step 1/1. Its function is as follows. Catalyzes a salvage reaction resulting in the formation of AMP, that is energically less costly than de novo synthesis. This is Adenine phosphoribosyltransferase from Geotalea daltonii (strain DSM 22248 / JCM 15807 / FRC-32) (Geobacter daltonii).